The chain runs to 264 residues: E3 ubiquitin-protein ligase MARCHF8 (264 aa).

A disordered region spans residues 15 to 47; the sequence is LGHSVSRSSNISKAGSPTSVSAPSSFPRTSVTP. Residues 17–47 show a composition bias toward polar residues; that stretch reads HSVSRSSNISKAGSPTSVSAPSSFPRTSVTP. An RING-CH-type zinc finger spans residues 45–106; sequence VTPSSQDICR…ELCKFEFIME (62 aa). Residues C53, C56, C70, C72, H80, C83, C96, and C99 each coordinate Zn(2+). Helical transmembrane passes span 130–150 and 170–190; these read CSVT…YVLI and FWTK…FMYV.

It localises to the cytoplasmic vesicle membrane. The protein resides in the lysosome membrane. Its subcellular location is the early endosome membrane. The catalysed reaction is S-ubiquitinyl-[E2 ubiquitin-conjugating enzyme]-L-cysteine + [acceptor protein]-L-lysine = [E2 ubiquitin-conjugating enzyme]-L-cysteine + N(6)-ubiquitinyl-[acceptor protein]-L-lysine.. It functions in the pathway protein modification; protein ubiquitination. E3 ubiquitin-protein ligase that mediates ubiquitination of cd86 and MHC class II proteins, such as hla-dr alpha and beta, and promotes their subsequent endocytosis and sorting to lysosomes via multivesicular bodies. This Xenopus tropicalis (Western clawed frog) protein is E3 ubiquitin-protein ligase MARCHF8 (marchf8).